The following is a 225-amino-acid chain: MRFFMLIGFNLLTALSSFCAAISANNSDNVEHEQEVAEAVAPPSINIEVKYDVVGKESENHDSFLEFYAEDTATLAYNVTNWEDTNITIFGVNGTIVTYPHGYPVADITGASIGPYEMEVNGTSKFGQDVTLNLPEGQYFLIPFLLASRFDEIVRIAAPPTLFEIVSPPISFFNPQFLSVQVIFLAIIGGVSYYYMKSKTNQRPSKKSATVKKVDESWLPETYKK.

The signal sequence occupies residues 1–24 (MRFFMLIGFNLLTALSSFCAAISA). The Lumenal segment spans residues 25-169 (NNSDNVEHEQ…PTLFEIVSPP (145 aa)). A helical membrane pass occupies residues 170–190 (ISFFNPQFLSVQVIFLAIIGG). Over 191–225 (VSYYYMKSKTNQRPSKKSATVKKVDESWLPETYKK) the chain is Cytoplasmic. Residues 203-225 (RPSKKSATVKKVDESWLPETYKK) form a disordered region. Residues 212-225 (KKVDESWLPETYKK) are compositionally biased toward basic and acidic residues.

It belongs to the IRC22 family.

Its subcellular location is the endoplasmic reticulum membrane. In terms of biological role, is probably involved in a pathway contributing to genomic integrity. The sequence is that of Increased recombination centers protein 22 (IRC22) from Saccharomyces cerevisiae (strain AWRI1631) (Baker's yeast).